Reading from the N-terminus, the 151-residue chain is S-protein homolog 1 (151 aa).

An N-terminal signal peptide occupies residues 1-18 (MNCIKQFLLAICFSLALT).

The protein belongs to the plant self-incompatibility (S1) protein family. Restricted to floral tissues.

It is found in the secreted. The protein is S-protein homolog 1 of Arabidopsis thaliana (Mouse-ear cress).